The chain runs to 292 residues: NADH-cytochrome b5 reductase 1 (292 aa).

The helical transmembrane segment at alanine 12–glycine 32 threads the bilayer. One can recognise an FAD-binding FR-type domain in the interval threonine 43–threonine 148. Residues threonine 128 to glycine 143 and histidine 154 to leucine 191 contribute to the FAD site.

Belongs to the flavoprotein pyridine nucleotide cytochrome reductase family. In terms of assembly, monomer. Component of the 2-(3-amino-3-carboxypropyl)histidine synthase complex composed of dph1, dph2, dph3 and a NADH-dependent reductase, predominantly cbr1. FAD is required as a cofactor.

The protein resides in the mitochondrion outer membrane. It catalyses the reaction 2 Fe(III)-[cytochrome b5] + NADH = 2 Fe(II)-[cytochrome b5] + NAD(+) + H(+). The catalysed reaction is 2 Fe(3+)-[Dph3] + NADH = 2 Fe(2+)-[Dph3] + NAD(+) + H(+). Its pathway is protein modification; peptidyl-diphthamide biosynthesis. In terms of biological role, NADH-dependent reductase for dph3 and cytochrome b5. Required for the first step of diphthamide biosynthesis, a post-translational modification of histidine which occurs in elongation factor 2. Dph1 and dph2 transfer a 3-amino-3-carboxypropyl (ACP) group from S-adenosyl-L-methionine (SAM) to a histidine residue, the reaction is assisted by a reduction system comprising dph3 and a NADH-dependent reductase, predominantly cbr1. By reducing dph3, also involved in the formation of the tRNA wobble base modification mcm5s 2U (5-methoxycarbonylmethyl-2-thiouridine), mediated by the elongator complex. The cytochrome b5/NADH cytochrome b5 reductase electron transfer system supports the catalytic activity of several sterol biosynthetic enzymes. This is NADH-cytochrome b5 reductase 1 (cbr1) from Aspergillus oryzae (strain ATCC 42149 / RIB 40) (Yellow koji mold).